A 273-amino-acid polypeptide reads, in one-letter code: Large ribosomal subunit protein uL2 (273 aa).

Disordered stretches follow at residues 34-54 and 223-273; these read LEKKSKSGGRNNNGRITTRHI and VAMN…RRRK.

It belongs to the universal ribosomal protein uL2 family. As to quaternary structure, part of the 50S ribosomal subunit. Forms a bridge to the 30S subunit in the 70S ribosome.

Its function is as follows. One of the primary rRNA binding proteins. Required for association of the 30S and 50S subunits to form the 70S ribosome, for tRNA binding and peptide bond formation. It has been suggested to have peptidyltransferase activity; this is somewhat controversial. Makes several contacts with the 16S rRNA in the 70S ribosome. This chain is Large ribosomal subunit protein uL2, found in Pseudomonas aeruginosa (strain LESB58).